The sequence spans 430 residues: Glial fibrillary acidic protein (430 aa).

The interval 1-69 (MERRRITSAR…KETRASERAE (69 aa)) is head. Phosphothreonine; by AURKB and ROCK1 is present on T7. R11 carries the post-translational modification Omega-N-methylarginine. A Phosphoserine; by AURKB and ROCK1 modification is found at S12. R20 bears the Omega-N-methylarginine mark. At R33 the chain carries Citrulline. S35 is modified (phosphoserine; by AURKB and ROCK1). T40 bears the Phosphothreonine mark. The 309-residue stretch at 66–374 (ERAEMMELND…KLLEGEENRI (309 aa)) folds into the IF rod domain. Positions 70–101 (MMELNDRFASYIEKVRFLEQQNKALAAELNQL) are coil 1A. Position 79 is a phosphoserine (S79). The tract at residues 102–112 (RAKEPTKLADV) is linker 1. Phosphothreonine occurs at positions 107 and 147. The coil 1B stretch occupies residues 113–211 (YQAELRELRL…EEEVRELREQ (99 aa)). Residues 212–227 (LAQQQVHVEMDVAKPD) form a linker 12 region. Residues 228–249 (LTAALREIRTQYEAVATSNMQE) are coil 2A. A linker 2 region spans residues 250 to 253 (TEEW). The coil 2B stretch occupies residues 254–374 (YRSKFADLTD…KLLEGEENRI (121 aa)). At S266 the chain carries Phosphoserine. R267 carries the citrulline modification. At S320 the chain carries Phosphoserine. The tract at residues 375–430 (TIPVQTFSNLQIRETSLDTKSVSEGHLKRNIVVKTVEMRDGEVIKDSKQEHKDVVM) is tail. T380 is subject to Phosphothreonine. S382 bears the Phosphoserine mark. Residues R403 and R413 each carry the citrulline modification.

This sequence belongs to the intermediate filament family. As to quaternary structure, interacts with SYNM. In terms of assembly, interacts with PSEN1 (via N-terminus). In terms of processing, phosphorylated by PKN1. In terms of tissue distribution, brain; isoform 2 expressed at 20-fold lower level than isoform 1.

The protein resides in the cytoplasm. Its function is as follows. GFAP, a class-III intermediate filament, is a cell-specific marker that, during the development of the central nervous system, distinguishes astrocytes from other glial cells. In Mus musculus (Mouse), this protein is Glial fibrillary acidic protein (Gfap).